Consider the following 476-residue polypeptide: Aspartyl/glutamyl-tRNA(Asn/Gln) amidotransferase subunit B (476 aa).

Belongs to the GatB/GatE family. GatB subfamily. As to quaternary structure, heterotrimer of A, B and C subunits.

The enzyme catalyses L-glutamyl-tRNA(Gln) + L-glutamine + ATP + H2O = L-glutaminyl-tRNA(Gln) + L-glutamate + ADP + phosphate + H(+). It carries out the reaction L-aspartyl-tRNA(Asn) + L-glutamine + ATP + H2O = L-asparaginyl-tRNA(Asn) + L-glutamate + ADP + phosphate + 2 H(+). Its function is as follows. Allows the formation of correctly charged Asn-tRNA(Asn) or Gln-tRNA(Gln) through the transamidation of misacylated Asp-tRNA(Asn) or Glu-tRNA(Gln) in organisms which lack either or both of asparaginyl-tRNA or glutaminyl-tRNA synthetases. The reaction takes place in the presence of glutamine and ATP through an activated phospho-Asp-tRNA(Asn) or phospho-Glu-tRNA(Gln). The protein is Aspartyl/glutamyl-tRNA(Asn/Gln) amidotransferase subunit B of Laribacter hongkongensis (strain HLHK9).